Reading from the N-terminus, the 640-residue chain is Chaperone protein HtpG (640 aa).

Positions 1–348 (MAQYKFETEV…SEDLPLNVSR (348 aa)) are a; substrate-binding. The segment at 349-565 (EILQQNRILS…ETDPSLQMER (217 aa)) is b. Residues 566 to 640 (MMRAMGQFNT…RLNRLMTNLK (75 aa)) are c.

This sequence belongs to the heat shock protein 90 family. Homodimer.

Its subcellular location is the cytoplasm. Molecular chaperone. Has ATPase activity. In Treponema denticola (strain ATCC 35405 / DSM 14222 / CIP 103919 / JCM 8153 / KCTC 15104), this protein is Chaperone protein HtpG.